The sequence spans 371 residues: Alginate lyase (371 aa).

The N-terminal stretch at 1 to 28 (MRRPMTLFKRISSPALLALALFGGAAHA) is a signal peptide. Substrate contacts are provided by residues 67 to 68 (SK), 140 to 141 (HT), and Tyr258.

The protein belongs to the polysaccharide lyase 5 family.

The protein localises to the periplasm. It carries out the reaction Eliminative cleavage of alginate to give oligosaccharides with 4-deoxy-alpha-L-erythro-hex-4-enuronosyl groups at their non-reducing ends and beta-D-mannuronate at their reducing end.. Its function is as follows. Catalyzes the depolymerization of alginate by cleaving the beta-1,4 glycosidic bond between two adjacent sugar residues via a beta-elimination mechanism. May serve to degrade mislocalized alginate that is trapped in the periplasmic space. The protein is Alginate lyase of Pseudomonas putida (strain ATCC 47054 / DSM 6125 / CFBP 8728 / NCIMB 11950 / KT2440).